Reading from the N-terminus, the 303-residue chain is Probable 5-dehydro-4-deoxyglucarate dehydratase (303 aa).

Belongs to the DapA family.

The catalysed reaction is 5-dehydro-4-deoxy-D-glucarate + H(+) = 2,5-dioxopentanoate + CO2 + H2O. It functions in the pathway carbohydrate acid metabolism; D-glucarate degradation; 2,5-dioxopentanoate from D-glucarate: step 2/2. In Pseudomonas putida (strain GB-1), this protein is Probable 5-dehydro-4-deoxyglucarate dehydratase.